Consider the following 746-residue polypeptide: UvrABC system protein C (746 aa).

The GIY-YIG domain maps to 18-97 (AKPGVYKWRD…IKEFDPRFNV (80 aa)). The UVR domain occupies 211–246 (RPYIAQLTRDMKEASAELEFEKAARLRDQIQMLETV). Positions 557–577 (ANGNDNGEGGSDISGKGHAVP) are disordered.

Belongs to the UvrC family. As to quaternary structure, interacts with UvrB in an incision complex.

It is found in the cytoplasm. In terms of biological role, the UvrABC repair system catalyzes the recognition and processing of DNA lesions. UvrC both incises the 5' and 3' sides of the lesion. The N-terminal half is responsible for the 3' incision and the C-terminal half is responsible for the 5' incision. This is UvrABC system protein C from Bifidobacterium longum (strain DJO10A).